Here is a 114-residue protein sequence, read N- to C-terminus: Cytochrome c oxidase subunit 4B (114 aa).

Helical transmembrane passes span Q29–T49, F56–F76, and A89–L109.

The protein belongs to the cytochrome c oxidase bacterial subunit 4 family.

The protein localises to the cell membrane. It carries out the reaction 4 Fe(II)-[cytochrome c] + O2 + 8 H(+)(in) = 4 Fe(III)-[cytochrome c] + 2 H2O + 4 H(+)(out). The polypeptide is Cytochrome c oxidase subunit 4B (ctaF) (Alkalihalophilus pseudofirmus (strain ATCC BAA-2126 / JCM 17055 / OF4) (Bacillus pseudofirmus)).